Reading from the N-terminus, the 133-residue chain is MAKWNSDCSLEFGVFVLNGYEYLLGFLLISSLVPILSLTASRLLRPGRRGPERRTTYESGMEPIGGAWIQFNVRYYMFALVFVIFDVETVFLYPWAVAFNRLGLLAFVEALIFITILVVGLAYAWRKGALEWS.

The next 3 helical transmembrane spans lie at 22-44 (YLLG…SRLL), 77-97 (MFAL…PWAV), and 102-122 (LGLL…VGLA).

Belongs to the complex I subunit 3 family. As to quaternary structure, NDH-1 can be composed of about 15 different subunits; different subcomplexes with different compositions have been identified which probably have different functions.

The protein resides in the cellular thylakoid membrane. It carries out the reaction a plastoquinone + NADH + (n+1) H(+)(in) = a plastoquinol + NAD(+) + n H(+)(out). The catalysed reaction is a plastoquinone + NADPH + (n+1) H(+)(in) = a plastoquinol + NADP(+) + n H(+)(out). NDH-1 shuttles electrons from an unknown electron donor, via FMN and iron-sulfur (Fe-S) centers, to quinones in the respiratory and/or the photosynthetic chain. The immediate electron acceptor for the enzyme in this species is believed to be plastoquinone. Couples the redox reaction to proton translocation, and thus conserves the redox energy in a proton gradient. Cyanobacterial NDH-1 also plays a role in inorganic carbon-concentration. The polypeptide is NAD(P)H-quinone oxidoreductase subunit 3 (Synechococcus sp. (strain ATCC 27144 / PCC 6301 / SAUG 1402/1) (Anacystis nidulans)).